A 341-amino-acid chain; its full sequence is Methionine import ATP-binding protein MetN (341 aa).

One can recognise an ABC transporter domain in the interval 9–247; sequence ISVEQLNKEI…PQSAITEELF (239 aa). 41-48 lines the ATP pocket; the sequence is GHSGSGKS.

It belongs to the ABC transporter superfamily. Methionine importer (TC 3.A.1.24) family. In terms of assembly, the complex is composed of two ATP-binding proteins (MetN), two transmembrane proteins (MetI) and a solute-binding protein (MetQ).

It is found in the cell inner membrane. It catalyses the reaction L-methionine(out) + ATP + H2O = L-methionine(in) + ADP + phosphate + H(+). The catalysed reaction is D-methionine(out) + ATP + H2O = D-methionine(in) + ADP + phosphate + H(+). In terms of biological role, part of the ABC transporter complex MetNIQ involved in methionine import. Responsible for energy coupling to the transport system. The sequence is that of Methionine import ATP-binding protein MetN from Chlamydia abortus (strain DSM 27085 / S26/3) (Chlamydophila abortus).